A 154-amino-acid chain; its full sequence is NADPH-dependent 7-cyano-7-deazaguanine reductase (154 aa).

The tract at residues Met-1 to Glu-24 is disordered. Cys-52 functions as the Thioimide intermediate in the catalytic mechanism. Asp-59 acts as the Proton donor in catalysis. Substrate contacts are provided by residues Val-74–Ser-76 and His-93–Glu-94.

Belongs to the GTP cyclohydrolase I family. QueF type 1 subfamily.

It is found in the cytoplasm. The catalysed reaction is 7-aminomethyl-7-carbaguanine + 2 NADP(+) = 7-cyano-7-deazaguanine + 2 NADPH + 3 H(+). It functions in the pathway tRNA modification; tRNA-queuosine biosynthesis. Functionally, catalyzes the NADPH-dependent reduction of 7-cyano-7-deazaguanine (preQ0) to 7-aminomethyl-7-deazaguanine (preQ1). The polypeptide is NADPH-dependent 7-cyano-7-deazaguanine reductase (Sinorhizobium fredii (strain NBRC 101917 / NGR234)).